Reading from the N-terminus, the 979-residue chain is MRRPRRPGGSGGSGGSGGLRLLVCLLLLSGRPGGCSAISAHGCLFDRRLCSHLEVCIQDGLFGQCQAGVGQARPLLQVTSPVLQRLQGVLRQLMSQGLSWHDDLTQHVISQEMERIPRLRPPEPHPRDRSGLVPRKPGPAGELLTQGNPTGSSPAAQGFPRPAGGRSWGGSPLSSLQAELLPPLLEHLLMPPQPPHPALTYEPALLQPYLFHQFGSRDGSRGSESSSGVVGVGHLSKAEGPALFSRSASKAILGTHSGHSFGDLTGPSPAQLFQDSGLLYMAQELPVPGRARAPRLPENGGNRAEDSSEGHEEEVLGGRGEKSPPQAAQPELSLQRLTAVLAGYGVELRQLTPEQFSTLLTLLQLLPKGTGRNLEGAVNVGGADVKKTIQQMQRGDPAEALPPTPSLPGYLTASPASSEVQQVLSPGFPEPPHTPSPLGSSSVLLEKKSPLGQSQPTVVGRPSARPSAEEYGYIVTDQKPLSLVAGVRLLEILAEHVHMSSGSFINISVVGPAVTFRIRHNEQNLSLADVTQQAGLVKSELEAQTGLQILQTGVGQREEAAEVLPRQAHGISPMRSVLLTLVALAGVAGLLVALAVALCMRHHSRQRDKERLAALGPEGAHGDTTFEYQDLCRQHMATKSLFNRAEGQPEPSRVSSVSSQFSDAAQASPSSHSSTPSWCEEPAQANMDISTGHMILAYMEDHLRNRDRLAKEWQALCAYQAEPNTCAAAQDESNIKKNRHPDFLPYDHARIKLKVESSPSRSDYINASPIIEHDPRMPAYIATQGPLSHTIADFWQMVWESGCTVIVMLTPLVEDGVKQCDRYWPDEGSSLYHVYEVNLVSEHIWCEDFLVRSFYLKNLQTQETRTLTQFHFLSWPAEGTPASTRPLLDFRRKVNKCYRGRSCPIIVHCSDGAGRTGTYILIDMVLNRMAKGVKEIDIAATLEHVRDQRPGLVRSKDQFEFALTAVAEEVNAILKALPQ.

The first 37 residues, 1-37, serve as a signal peptide directing secretion; the sequence is MRRPRRPGGSGGSGGSGGLRLLVCLLLLSGRPGGCSA. Residues 38–134 form an RESP18 homology domain region; that stretch reads ISAHGCLFDR…HPRDRSGLVP (97 aa). The Lumenal portion of the chain corresponds to 38 to 575; sequence ISAHGCLFDR…RQAHGISPMR (538 aa). A disulfide bridge links C56 with C65. A compositionally biased stretch (basic and acidic residues) spans 113–130; the sequence is MERIPRLRPPEPHPRDRS. 3 disordered regions span residues 113 to 173, 289 to 330, and 392 to 443; these read MERI…GSPL, GRAR…AAQP, and MQRG…SSSV. Residues 145 to 155 show a composition bias toward polar residues; it reads TQGNPTGSSPA. Basic and acidic residues predominate over residues 303 to 322; the sequence is RAEDSSEGHEEEVLGGRGEK. Residues S307 and S308 each carry the phosphoserine modification. The span at 414–424 shows a compositional bias: polar residues; the sequence is SPASSEVQQVL. The interval 449–575 is sufficient for dimerization of proICA512; that stretch reads SPLGQSQPTV…RQAHGISPMR (127 aa). 2 N-linked (GlcNAc...) asparagine glycosylation sites follow: N506 and N524. Residues 576-600 traverse the membrane as a helical segment; the sequence is SVLLTLVALAGVAGLLVALAVALCM. Residues 601-732 are sufficient for dimerization of proICA512; that stretch reads RHHSRQRDKE…PNTCAAAQDE (132 aa). Residues 601-979 are Cytoplasmic-facing; sequence RHHSRQRDKE…VNAILKALPQ (379 aa). Positions 644 to 680 are disordered; it reads RAEGQPEPSRVSSVSSQFSDAAQASPSSHSSTPSWCE. A compositionally biased stretch (low complexity) spans 648–677; sequence QPEPSRVSSVSSQFSDAAQASPSSHSSTPS. A Tyrosine-protein phosphatase domain is found at 709–969; it reads LAKEWQALCA…EFALTAVAEE (261 aa). Residue K754 forms a Glycyl lysine isopeptide (Lys-Gly) (interchain with G-Cter in SUMO) linkage.

It belongs to the protein-tyrosine phosphatase family. Receptor class 8 subfamily. In terms of assembly, homodimer; shown for the unprocessed protein (proICA512) in the endoplasmic reticulum and resolved during protein maturation as ICA512-TMF seems to be predominantly monomeric in secretory granules; however, ICA512-CCF interacts with ICA512-TMF disrupting the ICA512-TMF:SNTB2 complex. The isolated lumenal RESP18 homology domain has been shown to form disulfide-linked homooligomers. Interacts (via cytoplasmic domain) with phosphorylated SNTB2; this protects PTPRN against cleavage by CAPN1 to produce ICA512-CCF. Dephosphorylation of SNTB2 upon insulin stimulation disrupts the interaction and results in PTPRN cleavage. Interacts with SNX19. ICA512-CCF interacts with PIAS4; in the nucleus. Interacts with STAT5B (phosphorylated); down-regulated by ICA512-CCF sumoylation; ICA512-CCF prevents STAT5B dephosphorylation; ICA512-CCF mediates interaction of STAT5B with PIAS4. Interacts (via RESP18 homology domain) with insulin and proinsulin. Interacts with PTPRN2, PTPRA and PTPRE. In terms of processing, subject to proteolytic cleavage at multiple sites. Subject to cleavage on a pair of basic residues. On exocytosis of secretory granules in pancreatic beta-cells ICA512-TMF is transiently inserted in the plasma-membrane and cleaved by mu-type calpain CPN1 to yield ICA512-CCF. Post-translationally, O-glycosylated. N-glycosylated. In terms of processing, sumoylated at two sites including Lys-754. Sumoylation decreases interaction with STAT5. Detected in pituitary. Detected in brain (at protein level). Detected in brain. Weakly expressed in the colon, intestine, stomach and pancreas.

The protein resides in the membrane. It localises to the cytoplasmic vesicle. The protein localises to the secretory vesicle membrane. Its subcellular location is the perikaryon. It is found in the cell projection. The protein resides in the axon. It localises to the synapse. The protein localises to the cell membrane. Its subcellular location is the endosome. It is found in the nucleus. In terms of biological role, plays a role in vesicle-mediated secretory processes. Required for normal accumulation of secretory vesicles in hippocampus, pituitary and pancreatic islets. Required for the accumulation of normal levels of insulin-containing vesicles and preventing their degradation. Plays a role in insulin secretion in response to glucose stimuli. Required for normal accumulation of the neurotransmitters norepinephrine, dopamine and serotonin in the brain. In females, but not in males, required for normal accumulation and secretion of pituitary hormones, such as luteinizing hormone (LH) and follicle-stimulating hormone (FSH). Seems to lack intrinsic enzyme activity. Required to maintain normal levels of renin expression and renin release. May regulate catalytic active protein-tyrosine phosphatases such as PTPRA through dimerization. Its function is as follows. ICA512-TMF regulates dynamics and exocytosis of insulin secretory granules (SGs); binding of ICA512-TMF to SNTB2/beta-2-syntrophin is proposed to restrain SGs mobility and exocytosis by tethering them to the actin cytoskeleton depending on UTRN; the function is inhibited by cytoplasmic ICA512-CFF dimerizing with ICA512-TMF and displacing SNTB2. ICA512-CCF translocated to the nucleus promotes expression of insulin and other granule-related genes; the function implicates binding to and regulating activity of STAT5B probably by preventing its dephosphorylation and potentially by inducing its sumoylation by recruiting PIAS4. Enhances pancreatic beta-cell proliferation by converging with signaling by STAT5B and STAT3. ICA512-CCF located in the cytoplasm regulates dynamics and exocytosis of insulin secretory granules (SGs) by dimerizing with ICA512-TMF and displacing SNTB2 thus enhancing SGs mobility and exocytosis. This is Receptor-type tyrosine-protein phosphatase-like N (Ptprn) from Mus musculus (Mouse).